Reading from the N-terminus, the 246-residue chain is MHGLIPDKLPRHLAIIMDGNGRWAQERMLTRIIGHQKGVETVRIIVEECSRLGIGYLTLFAFSAENWLRPKTEVKALMALLKKYIASEAARMDANNIRFNVIGNRDELPPDVNKAVQGAIDRTSGNTGMILTLALSYGARQEIMTAATRIASDIASGVLKADDLSETAFASYLFTSGLPDPDFLIRTSGEMRISNFLLWQLAYTEFYFSSVNWPEFTPEELYRALSDYQARERRFGRTSAQINTRS.

Asp-18 is a catalytic residue. Asp-18 provides a ligand contact to Mg(2+). Substrate is bound by residues 19–22 (GNGR), Trp-23, Arg-31, His-35, and 63–65 (SAE). Asn-66 serves as the catalytic Proton acceptor. Substrate contacts are provided by residues Trp-67, Arg-69, Arg-186, and 192 to 194 (RIS). Mg(2+) is bound at residue Glu-205.

The protein belongs to the UPP synthase family. As to quaternary structure, homodimer. The cofactor is Mg(2+).

Catalyzes the condensation of isopentenyl diphosphate (IPP) with allylic pyrophosphates generating different type of terpenoids. The protein is Isoprenyl transferase of Geobacter sulfurreducens (strain ATCC 51573 / DSM 12127 / PCA).